We begin with the raw amino-acid sequence, 242 residues long: uncharacterized protein (242 aa).

The segment covering 1–11 (MNFEAASAPSQ) has biased composition (low complexity). Residues 1–45 (MNFEAASAPSQQPSPTPAPKTEEPKENGGSEQQADQPENSKKDDV) form a disordered region.

It to U.parvum UU171.

This is an uncharacterized protein from Ureaplasma parvum serovar 3 (strain ATCC 700970).